A 448-amino-acid polypeptide reads, in one-letter code: Ribosome biogenesis protein YTM1 (448 aa).

Residues 5–86 (TSNQAVVFST…EETLEIEYIE (82 aa)) are ubiquitin-like (UBL) domain. 6 WD repeats span residues 98–136 (PHES…TLDA), 191–230 (LHTA…KHEV), 271–309 (SHIG…CTRT), 312–351 (ASEK…ALSA), 357–397 (LHPA…AAIS), and 403–439 (DGTK…ETQG). A disordered region spans residues 225-261 (PPKHEVPEPTITAADQRTKKRRKVDPSSGDSSSPTAI).

Belongs to the WD repeat WDR12/YTM1 family. Component of the NOP7 complex, composed of ERB1, NOP7 and YTM1. The complex is held together by ERB1, which interacts with NOP7 via its N-terminal domain and with YTM1 via a high-affinity interaction between the seven-bladed beta-propeller domains of the 2 proteins. The NOP7 complex associates with the 66S pre-ribosome. Interacts (via UBL domain) with MDN1 (via VWFA/MIDAS domain).

The protein localises to the nucleus. Its subcellular location is the nucleolus. It localises to the nucleoplasm. Component of the NOP7 complex, which is required for maturation of the 25S and 5.8S ribosomal RNAs and formation of the 60S ribosome. This is Ribosome biogenesis protein YTM1 from Coprinopsis cinerea (strain Okayama-7 / 130 / ATCC MYA-4618 / FGSC 9003) (Inky cap fungus).